We begin with the raw amino-acid sequence, 595 residues long: Coronatine-insensitive protein homolog 1a (595 aa).

Residues 20–62 (WVPDEALHLVMGHVEDPRDREAASRVCRRWHRIDALTRKHVTV) enclose the F-box domain. 5 residues coordinate jasmonate: R90, R351, Y389, R412, and R499.

Interacts with TIFY6A/JAZ3, TIFY6B/JAZ4 and TIFY11D/JAZ12 in a coronatine-dependent manner. Interacts with TIFY9/JAZ5, TIFY10A/JAZ6, TIFY10B/JAZ7, TIFY11A/JAZ9 and TIFY11C/JAZ11 in a coronatine-dependent manner.

In terms of biological role, involved in jasmonate (JA) signaling. Required for jasmonate signaling in plant defense responses. Can complement Arabidopsis coi1-1 mutant and restore jasmonate signaling. Required for JA-regulated defense responses to infestation by the leaffolder Cnaphalocrocis medinalis. May act on an initial response of jasmonate-regulated gene expression toward drought tolerance as part of a BHLH148-TIFY11D/JAZ12-COI1A complex. Component of SCF(COI1) E3 ubiquitin ligase complexes, which may mediate the ubiquitination and subsequent proteasomal degradation of target proteins, including TIFY/JAZ family. This Oryza sativa subsp. indica (Rice) protein is Coronatine-insensitive protein homolog 1a.